The primary structure comprises 172 residues: Cytochrome c oxidase subunit 4 isoform 2, mitochondrial (172 aa).

Residues methionine 1–threonine 18 constitute a mitochondrion transit peptide. The segment at methionine 1–arginine 33 is disordered. Residues leucine 16–arginine 33 are compositionally biased toward polar residues. Residues glutamine 19–asparagine 101 lie on the Mitochondrial matrix side of the membrane. The helical transmembrane segment at glutamate 102–tyrosine 127 threads the bilayer. The Mitochondrial intermembrane segment spans residues valine 128 to lysine 172.

This sequence belongs to the cytochrome c oxidase IV family. In terms of assembly, component of the cytochrome c oxidase (complex IV, CIV), a multisubunit enzyme composed of 14 subunits. The complex is composed of a catalytic core of 3 subunits MT-CO1, MT-CO2 and MT-CO3, encoded in the mitochondrial DNA, and 11 supernumerary subunits COX4I, COX5A, COX5B, COX6A, COX6B, COX6C, COX7A, COX7B, COX7C, COX8 and NDUFA4, which are encoded in the nuclear genome. The complex exists as a monomer or a dimer and forms supercomplexes (SCs) in the inner mitochondrial membrane with NADH-ubiquinone oxidoreductase (complex I, CI) and ubiquinol-cytochrome c oxidoreductase (cytochrome b-c1 complex, complex III, CIII), resulting in different assemblies (supercomplex SCI(1)III(2)IV(1) and megacomplex MCI(2)III(2)IV(2)). Highly expressed in lung.

The protein localises to the mitochondrion inner membrane. Its pathway is energy metabolism; oxidative phosphorylation. Functionally, component of the cytochrome c oxidase, the last enzyme in the mitochondrial electron transport chain which drives oxidative phosphorylation. The respiratory chain contains 3 multisubunit complexes succinate dehydrogenase (complex II, CII), ubiquinol-cytochrome c oxidoreductase (cytochrome b-c1 complex, complex III, CIII) and cytochrome c oxidase (complex IV, CIV), that cooperate to transfer electrons derived from NADH and succinate to molecular oxygen, creating an electrochemical gradient over the inner membrane that drives transmembrane transport and the ATP synthase. Cytochrome c oxidase is the component of the respiratory chain that catalyzes the reduction of oxygen to water. Electrons originating from reduced cytochrome c in the intermembrane space (IMS) are transferred via the dinuclear copper A center (CU(A)) of subunit 2 and heme A of subunit 1 to the active site in subunit 1, a binuclear center (BNC) formed by heme A3 and copper B (CU(B)). The BNC reduces molecular oxygen to 2 water molecules using 4 electrons from cytochrome c in the IMS and 4 protons from the mitochondrial matrix. This chain is Cytochrome c oxidase subunit 4 isoform 2, mitochondrial (Cox4i2), found in Rattus norvegicus (Rat).